We begin with the raw amino-acid sequence, 598 residues long: Nuclear receptor subfamily 4 group A member 2 (598 aa).

Residues 1 to 22 (MPCVQAQYGSSPQGASPASQSY) form a disordered region. A compositionally biased stretch (low complexity) spans 8–22 (YGSSPQGASPASQSY). Positions 260–335 (EGLCAVCGDN…VGMVKEVVRT (76 aa)) form a DNA-binding region, nuclear receptor. NR C4-type zinc fingers lie at residues 263–283 (CAVC…CEGC) and 299–323 (CLAN…FQKC). The Bipartite nuclear localization signal (NLS1) motif lies at 287–314 (FKRTVQKNAKYVCLANKNCPVDKRRRNR). A disordered region spans residues 337–361 (SLKGRRGRLPSKPKSPQDPSPPSPP). Residues 338–350 (LKGRRGRLPSKPK) carry the Nuclear localization signal (NLS1) motif. Over residues 352–361 (PQDPSPPSPP) the composition is skewed to pro residues. Positions 360–595 (PPVSLISALV…AIIDKLFLDT (236 aa)) constitute an NR LBD domain. The short motif at 443–452 (FLELFVLRLA) is the nuclear export sequence (NES1) element. Residues 568 to 577 (QGLQRIFYLK) carry the nuclear export sequence (NES2) motif.

This sequence belongs to the nuclear hormone receptor family. NR4 subfamily. As to quaternary structure, interacts with SFPQ, NCOR2, SIN3A and HADC1. The interaction with NCOR2 increases in the absence of PITX3. Interacts with PER2. In terms of tissue distribution, brain.

The protein localises to the cytoplasm. It is found in the nucleus. Functionally, transcriptional regulator which is important for the differentiation and maintenance of meso-diencephalic dopaminergic (mdDA) neurons during development. It is crucial for expression of a set of genes such as SLC6A3, SLC18A2, TH and DRD2 which are essential for development of mdDA neurons. In Mus musculus (Mouse), this protein is Nuclear receptor subfamily 4 group A member 2 (Nr4a2).